A 489-amino-acid chain; its full sequence is Ketol-acid reductoisomerase (NADP(+)) (489 aa).

The region spanning 16 to 207 (IKKCRFMEKK…GGHRAGVLES (192 aa)) is the KARI N-terminal Rossmann domain. Residues 44 to 47 (CGSQ), Arg-67, Ser-77, and 107 to 109 (DKQ) each bind NADP(+). The active site involves His-131. Residue Gly-157 participates in NADP(+) binding. KARI C-terminal knotted domains are found at residues 208–343 (SFVA…QSPD) and 344–483 (YDKK…MKNM). Asp-216, Glu-220, Glu-388, and Glu-392 together coordinate Mg(2+). Position 413 (Ser-413) interacts with substrate.

Belongs to the ketol-acid reductoisomerase family. Requires Mg(2+) as cofactor.

The enzyme catalyses (2R)-2,3-dihydroxy-3-methylbutanoate + NADP(+) = (2S)-2-acetolactate + NADPH + H(+). It carries out the reaction (2R,3R)-2,3-dihydroxy-3-methylpentanoate + NADP(+) = (S)-2-ethyl-2-hydroxy-3-oxobutanoate + NADPH + H(+). Its pathway is amino-acid biosynthesis; L-isoleucine biosynthesis; L-isoleucine from 2-oxobutanoate: step 2/4. The protein operates within amino-acid biosynthesis; L-valine biosynthesis; L-valine from pyruvate: step 2/4. In terms of biological role, involved in the biosynthesis of branched-chain amino acids (BCAA). Catalyzes an alkyl-migration followed by a ketol-acid reduction of (S)-2-acetolactate (S2AL) to yield (R)-2,3-dihydroxy-isovalerate. In the isomerase reaction, S2AL is rearranged via a Mg-dependent methyl migration to produce 3-hydroxy-3-methyl-2-ketobutyrate (HMKB). In the reductase reaction, this 2-ketoacid undergoes a metal-dependent reduction by NADPH to yield (R)-2,3-dihydroxy-isovalerate. In Buchnera aphidicola subsp. Diuraphis noxia, this protein is Ketol-acid reductoisomerase (NADP(+)).